The chain runs to 372 residues: Queuine tRNA-ribosyltransferase (372 aa).

The active-site Proton acceptor is Asp-89. Residues 89 to 93 (DSGGF), Asp-143, Gln-185, and Gly-212 each bind substrate. The segment at 243–249 (GVGKPED) is RNA binding. Asp-262 serves as the catalytic Nucleophile. Positions 267–271 (TRNAR) are RNA binding; important for wobble base 34 recognition. Zn(2+) is bound by residues Cys-300, Cys-302, Cys-305, and His-331.

This sequence belongs to the queuine tRNA-ribosyltransferase family. As to quaternary structure, homodimer. Within each dimer, one monomer is responsible for RNA recognition and catalysis, while the other monomer binds to the replacement base PreQ1. Requires Zn(2+) as cofactor.

It catalyses the reaction 7-aminomethyl-7-carbaguanine + guanosine(34) in tRNA = 7-aminomethyl-7-carbaguanosine(34) in tRNA + guanine. The protein operates within tRNA modification; tRNA-queuosine biosynthesis. In terms of biological role, catalyzes the base-exchange of a guanine (G) residue with the queuine precursor 7-aminomethyl-7-deazaguanine (PreQ1) at position 34 (anticodon wobble position) in tRNAs with GU(N) anticodons (tRNA-Asp, -Asn, -His and -Tyr). Catalysis occurs through a double-displacement mechanism. The nucleophile active site attacks the C1' of nucleotide 34 to detach the guanine base from the RNA, forming a covalent enzyme-RNA intermediate. The proton acceptor active site deprotonates the incoming PreQ1, allowing a nucleophilic attack on the C1' of the ribose to form the product. After dissociation, two additional enzymatic reactions on the tRNA convert PreQ1 to queuine (Q), resulting in the hypermodified nucleoside queuosine (7-(((4,5-cis-dihydroxy-2-cyclopenten-1-yl)amino)methyl)-7-deazaguanosine). This chain is Queuine tRNA-ribosyltransferase, found in Chromohalobacter salexigens (strain ATCC BAA-138 / DSM 3043 / CIP 106854 / NCIMB 13768 / 1H11).